The chain runs to 196 residues: Peptidyl-tRNA hydrolase (196 aa).

H15 contacts tRNA. H20 (proton acceptor) is an active-site residue. Y66, N68, and N114 together coordinate tRNA.

This sequence belongs to the PTH family. Monomer.

The protein localises to the cytoplasm. The catalysed reaction is an N-acyl-L-alpha-aminoacyl-tRNA + H2O = an N-acyl-L-amino acid + a tRNA + H(+). In terms of biological role, hydrolyzes ribosome-free peptidyl-tRNAs (with 1 or more amino acids incorporated), which drop off the ribosome during protein synthesis, or as a result of ribosome stalling. Catalyzes the release of premature peptidyl moieties from peptidyl-tRNA molecules trapped in stalled 50S ribosomal subunits, and thus maintains levels of free tRNAs and 50S ribosomes. The chain is Peptidyl-tRNA hydrolase from Polynucleobacter necessarius subsp. necessarius (strain STIR1).